Consider the following 95-residue polypeptide: Small ribosomal subunit protein bS20c (95 aa).

Belongs to the bacterial ribosomal protein bS20 family.

The protein localises to the plastid. Its subcellular location is the chloroplast. Functionally, binds directly to 16S ribosomal RNA. This Pyropia yezoensis (Susabi-nori) protein is Small ribosomal subunit protein bS20c.